A 316-amino-acid chain; its full sequence is MSNKLEQLRKLTTVVADTGEIDAIKKYQPEDATTNPSLILKAAQIAEYAPLIDASIEYAKTQSDDKAQQIQDTCDMLAVNIGKEILKTIPGRISTEVDARLSYDMEGSVAKARQLVKMYNDAGITNDRILIKLASTWEGIRAAEILEKEGINCNLTLLFSFAQARACAEAGVFLISPFVGRIMDWYKAKEGRDFEAQEDPGVLSVTKIYNYYKEYGYKTVVMGASFRNIGEILELAGCDRLTIAPALLAELEAAEGEVVEKLVDSKGAAERPAAMTHAEFLWEHNQDPMAVEKLAEGIRNFAVDQGKLEAMIAAKL.

Catalysis depends on Lys-132, which acts as the Schiff-base intermediate with substrate.

This sequence belongs to the transaldolase family. Type 1 subfamily. In terms of assembly, homodimer.

It localises to the cytoplasm. The catalysed reaction is D-sedoheptulose 7-phosphate + D-glyceraldehyde 3-phosphate = D-erythrose 4-phosphate + beta-D-fructose 6-phosphate. Its pathway is carbohydrate degradation; pentose phosphate pathway; D-glyceraldehyde 3-phosphate and beta-D-fructose 6-phosphate from D-ribose 5-phosphate and D-xylulose 5-phosphate (non-oxidative stage): step 2/3. In terms of biological role, transaldolase is important for the balance of metabolites in the pentose-phosphate pathway. This Vibrio vulnificus (strain CMCP6) protein is Transaldolase.